A 272-amino-acid chain; its full sequence is Glutamate racemase (272 aa).

Substrate contacts are provided by residues 16 to 17 and 48 to 49; these read DS and YG. Catalysis depends on C79, which acts as the Proton donor/acceptor. 80–81 provides a ligand contact to substrate; it reads NT. Residue C191 is the Proton donor/acceptor of the active site. 192–193 contributes to the substrate binding site; sequence TH.

It belongs to the aspartate/glutamate racemases family.

It carries out the reaction L-glutamate = D-glutamate. Its pathway is cell wall biogenesis; peptidoglycan biosynthesis. Functionally, provides the (R)-glutamate required for cell wall biosynthesis. In Chlorobaculum parvum (strain DSM 263 / NCIMB 8327) (Chlorobium vibrioforme subsp. thiosulfatophilum), this protein is Glutamate racemase.